The following is a 416-amino-acid chain: Homeobox protein ceh-62 (416 aa).

Positions 103-113 (TPTPIIATPSI) are enriched in low complexity. 2 disordered regions span residues 103-144 (TPTP…QATR) and 178-247 (FQNR…FPPT). Positions 118 to 127 (QPLQSPSAPN) are enriched in polar residues. Positions 130–189 (SRRKRTTFSPEQATRLEAEYIGDSYMAREKRHLLAQSLKLSENQVKTWFQNRRAKDKRDR) form a DNA-binding region, homeobox. Residues 193 to 218 (NASNHTSNSRRSSPSRKSSSDSTPTP) show a composition bias toward low complexity. Residues 219 to 240 (TQATQFDMPTQIQTASPPTTAD) show a composition bias toward polar residues.

It is found in the nucleus. The chain is Homeobox protein ceh-62 from Caenorhabditis elegans.